We begin with the raw amino-acid sequence, 504 residues long: Glycerol kinase (504 aa).

Thr-13 is an ADP binding site. ATP is bound by residues Thr-13, Thr-14, and Ser-15. Thr-13 contributes to the sn-glycerol 3-phosphate binding site. Arg-17 serves as a coordination point for ADP. Sn-glycerol 3-phosphate is bound by residues Arg-83, Glu-84, and Tyr-135. Residues Arg-83, Glu-84, and Tyr-135 each contribute to the glycerol site. His-231 carries the phosphohistidine; by HPr modification. Residue Asp-245 coordinates sn-glycerol 3-phosphate. Glycerol-binding residues include Asp-245 and Gln-246. The ADP site is built by Thr-267 and Gly-310. ATP-binding residues include Thr-267, Gly-310, Gln-314, and Gly-411. ADP-binding residues include Gly-411 and Asn-415.

This sequence belongs to the FGGY kinase family. In terms of assembly, homotetramer and homodimer (in equilibrium). The phosphoenolpyruvate-dependent sugar phosphotransferase system (PTS), including enzyme I, and histidine-containing protein (HPr) are required for the phosphorylation, which leads to the activation of the enzyme.

It catalyses the reaction glycerol + ATP = sn-glycerol 3-phosphate + ADP + H(+). The protein operates within polyol metabolism; glycerol degradation via glycerol kinase pathway; sn-glycerol 3-phosphate from glycerol: step 1/1. Its activity is regulated as follows. Activated by phosphorylation and inhibited by fructose 1,6-bisphosphate (FBP). Key enzyme in the regulation of glycerol uptake and metabolism. Catalyzes the phosphorylation of glycerol to yield sn-glycerol 3-phosphate. The chain is Glycerol kinase from Ligilactobacillus salivarius (strain UCC118) (Lactobacillus salivarius).